A 239-amino-acid chain; its full sequence is Myogenic factor 6 (239 aa).

Positions 27–64 (QHLDMPGVSPLYDGNHSPLSPGPDNVPSETGGESSGDE) are disordered. Residues 96-147 (DRRKAATLRERRRLKKINEAFDALKRKSVANPNQRLPKVEILRSAISYIERL) enclose the bHLH domain. The disordered stretch occupies residues 155–184 (DEQERGQSGASDTRNDKEQNRPSGGDYCWK).

As to quaternary structure, efficient DNA binding requires dimerization with another bHLH protein.

Its subcellular location is the nucleus. Functionally, involved in muscle differentiation (myogenic factor). Induces fibroblasts to differentiate into myoblasts. Probable sequence specific DNA-binding protein. The polypeptide is Myogenic factor 6 (myf6) (Tetraodon nigroviridis (Spotted green pufferfish)).